The primary structure comprises 168 residues: Crossover junction endodeoxyribonuclease RuvC (168 aa).

Catalysis depends on residues D7, E66, and D138. Residues D7, E66, and D138 each contribute to the Mg(2+) site.

It belongs to the RuvC family. As to quaternary structure, homodimer which binds Holliday junction (HJ) DNA. The HJ becomes 2-fold symmetrical on binding to RuvC with unstacked arms; it has a different conformation from HJ DNA in complex with RuvA. In the full resolvosome a probable DNA-RuvA(4)-RuvB(12)-RuvC(2) complex forms which resolves the HJ. Requires Mg(2+) as cofactor.

It localises to the cytoplasm. The catalysed reaction is Endonucleolytic cleavage at a junction such as a reciprocal single-stranded crossover between two homologous DNA duplexes (Holliday junction).. Its function is as follows. The RuvA-RuvB-RuvC complex processes Holliday junction (HJ) DNA during genetic recombination and DNA repair. Endonuclease that resolves HJ intermediates. Cleaves cruciform DNA by making single-stranded nicks across the HJ at symmetrical positions within the homologous arms, yielding a 5'-phosphate and a 3'-hydroxyl group; requires a central core of homology in the junction. The consensus cleavage sequence is 5'-(A/T)TT(C/G)-3'. Cleavage occurs on the 3'-side of the TT dinucleotide at the point of strand exchange. HJ branch migration catalyzed by RuvA-RuvB allows RuvC to scan DNA until it finds its consensus sequence, where it cleaves and resolves the cruciform DNA. The polypeptide is Crossover junction endodeoxyribonuclease RuvC (Cereibacter sphaeroides (strain ATCC 17023 / DSM 158 / JCM 6121 / CCUG 31486 / LMG 2827 / NBRC 12203 / NCIMB 8253 / ATH 2.4.1.) (Rhodobacter sphaeroides)).